The sequence spans 944 residues: DNA ligase 4 (944 aa).

E280, K282, R287, E340, F382, E442, K447, K464, and K466 together coordinate ATP. K282 functions as the N6-AMP-lysine intermediate in the catalytic mechanism. E340 contacts Mg(2+). Position 442 (E442) interacts with Mg(2+). 2 consecutive BRCT domains span residues 681 to 780 and 836 to 941; these read PISN…PNYC and FPLF…DFPV.

Belongs to the ATP-dependent DNA ligase family. As to quaternary structure, component of the DNA ligase IV complex, composed of DNL4, LIF1 and NEJ1. Interacts (via BRCT domain) with LIF1. Interacts with NEJ1. Interacts with POL4 in the DNL4-LIF1 complex. Requires Mg(2+) as cofactor.

The protein resides in the nucleus. It catalyses the reaction ATP + (deoxyribonucleotide)n-3'-hydroxyl + 5'-phospho-(deoxyribonucleotide)m = (deoxyribonucleotide)n+m + AMP + diphosphate.. In terms of biological role, DNA ligase involved in DNA non-homologous end joining (NHEJ); required for double-strand break (DSB) repair. In Saccharomyces cerevisiae (strain ATCC 204508 / S288c) (Baker's yeast), this protein is DNA ligase 4 (DNL4).